We begin with the raw amino-acid sequence, 437 residues long: Trigger factor (437 aa).

Positions 161-246 constitute a PPIase FKBP-type domain; sequence DDQVNIDFVG…VNSVSAPVLP (86 aa).

Belongs to the FKBP-type PPIase family. Tig subfamily.

The protein localises to the cytoplasm. The enzyme catalyses [protein]-peptidylproline (omega=180) = [protein]-peptidylproline (omega=0). In terms of biological role, involved in protein export. Acts as a chaperone by maintaining the newly synthesized protein in an open conformation. Functions as a peptidyl-prolyl cis-trans isomerase. The protein is Trigger factor of Pseudomonas putida (strain ATCC 700007 / DSM 6899 / JCM 31910 / BCRC 17059 / LMG 24140 / F1).